Consider the following 283-residue polypeptide: Acetylglutamate kinase (283 aa).

Residues 63–64 (GG), Arg-85, and Asn-178 contribute to the substrate site.

It belongs to the acetylglutamate kinase family. ArgB subfamily.

The protein localises to the plastid. Its subcellular location is the chloroplast. It catalyses the reaction N-acetyl-L-glutamate + ATP = N-acetyl-L-glutamyl 5-phosphate + ADP. Its pathway is amino-acid biosynthesis; L-arginine biosynthesis; N(2)-acetyl-L-ornithine from L-glutamate: step 2/4. Its function is as follows. Catalyzes the ATP-dependent phosphorylation of N-acetyl-L-glutamate. This is Acetylglutamate kinase from Porphyra purpurea (Red seaweed).